A 71-amino-acid chain; its full sequence is Ranatuerin-2Va (71 aa).

Positions 1 to 22 (MFTLKKSFLLLFFLGTITLSLC) are cleaved as a signal peptide. The propeptide occupies 23–43 (EQERGADEDDGVEMTEEEVKR). Residues Cys66 and Cys71 are joined by a disulfide bond.

Expressed by the skin glands.

It localises to the secreted. In terms of biological role, antimicrobial peptide. This is Ranatuerin-2Va from Odorrana versabilis (Chinese bamboo leaf odorous frog).